We begin with the raw amino-acid sequence, 485 residues long: Elongation factor TuB, chloroplastic (485 aa).

The N-terminal 76 residues, 1–76 (MASISAASAT…TTHPRRFTVR (76 aa)), are a transit peptide targeting the chloroplast. The tr-type G domain occupies 86-290 (KPHVNIGTIG…NVDEYIPIPQ (205 aa)). Residues 95-102 (GHVDHGKT) form a G1 region. GTP is bound at residue 95 to 102 (GHVDHGKT). A G2 region spans residues 136–140 (GITIN). The segment at 157–160 (DCPG) is G3. GTP-binding positions include 157 to 161 (DCPGH) and 212 to 215 (NKQD). Positions 212–215 (NKQD) are G4. The segment at 250–252 (SAL) is G5.

It belongs to the TRAFAC class translation factor GTPase superfamily. Classic translation factor GTPase family. EF-Tu/EF-1A subfamily.

It localises to the plastid. It is found in the chloroplast. In terms of biological role, this protein promotes the GTP-dependent binding of aminoacyl-tRNA to the A-site of ribosomes during protein biosynthesis. The sequence is that of Elongation factor TuB, chloroplastic (TUFB) from Nicotiana sylvestris (Wood tobacco).